An 825-amino-acid polypeptide reads, in one-letter code: Hypoxia-inducible factor 1-alpha (825 aa).

Residues 1-30 (MEGAGGENEKKKMSSERRKEKSRDAARSRR) are disordered. Residues 1 to 401 (MEGAGGENEK…KEPDALTLLA (401 aa)) are interaction with TSGA10. Over residues 7–30 (ENEKKKMSSERRKEKSRDAARSRR) the composition is skewed to basic and acidic residues. Positions 17–70 (RRKEKSRDAARSRRSKESEVFYELAHQLPLPHNVSSHLDKASVMRLTISYLRVR) constitute a bHLH domain. The segment at 21-30 (KSRDAARSRR) is DNA-binding. Residues 85–158 (KAQMNCFYLK…THRNGPVRKG (74 aa)) form the PAS 1 domain. The segment at 170 to 191 (RMKCTLTSRGRTMNIKSATWKV) is required for heterodimer formation with ARNT. The PAS 2 domain maps to 228–298 (PHPSNIEIPL…KTHHDMFTKG (71 aa)). Residue serine 247 is modified to Phosphoserine; by CK1. Residues 302 to 345 (TGQYRMLAKRGGYVWVETQATVIYNTKDSQPQCIVCVNYVVSGI) form the PAC domain. The tract at residues 401–602 (APAAGDTIIS…STVTGFQQTQ (202 aa)) is ODD. Proline 402 is subject to 4-hydroxyproline. Residues 492 to 516 (QIQDQPASPSDGSTRQSSPEPNSPS) show a composition bias toward polar residues. The interval 492–520 (QIQDQPASPSDGSTRQSSPEPNSPSEYCF) is disordered. The interval 530–574 (FKLELVEKLFAEDTEAKNPFSAQDTDLDLEMLAPYIPMDDDFQLR) is NTAD. An N6-acetyllysine; alternate modification is found at lysine 531. A Glycyl lysine isopeptide (Lys-Gly) (interchain with G-Cter in ubiquitin); alternate cross-link involves residue lysine 531. Residues lysine 537 and lysine 546 each participate in a glycyl lysine isopeptide (Lys-Gly) (interchain with G-Cter in ubiquitin) cross-link. Phosphoserine; by GSK3-beta is present on serine 550. Threonine 554 carries the phosphothreonine; by GSK3-beta modification. Proline 563 is modified (4-hydroxyproline). Serine 575 bears the Phosphoserine; by PLK3 mark. The ID stretch occupies residues 575 to 784 (SFDQLSPLES…SDLACRLLGQ (210 aa)). Disordered stretches follow at residues 579–602 (LSPLESNSPSPPSVSTVTGFQQTQ) and 654–674 (AKASAYSGTHSRTASPDRAGK). At serine 588 the chain carries Phosphoserine; by GSK3-beta. The span at 654–667 (AKASAYSGTHSRTA) shows a compositional bias: polar residues. A Phosphoserine; by PLK3 modification is found at serine 657. The Nuclear localization signal signature appears at 717–721 (RKRKM). The tract at residues 785–825 (SMDESGLPQLTSYDCEVNAPIQGSRNLLQGEELLRALDQVN) is CTAD. Cysteine 799 is subject to S-nitrosocysteine. Asparagine 802 carries the post-translational modification (3S)-3-hydroxyasparagine.

In terms of assembly, interacts with the ARNT; forms a heterodimer that binds core DNA sequence 5'-TACGTG-3' within the hypoxia response element (HRE) of target gene promoters. Interacts with COPS5; the interaction increases the transcriptional activity of HIF1A through increased stability. Interacts with EP300 (via TAZ-type 1 domains); the interaction is stimulated in response to hypoxia and inhibited by CITED2. Interacts with CREBBP (via TAZ-type 1 domains). Interacts with NCOA1, NCOA2, APEX1 and HSP90. Interacts (hydroxylated within the ODD domain) with VHLL (via beta domain); the interaction, leads to polyubiquitination and subsequent HIF1A proteasomal degradation. During hypoxia, sumoylated HIF1A also binds VHL; the interaction promotes the ubiquitination of HIF1A. Interacts with SENP1; the interaction desumoylates HIF1A resulting in stabilization and activation of transcription. Interacts (via the ODD domain) with NAA10; the interaction appears not to acetylate HIF1A nor have any affect on protein stability, during hypoxia. Interacts with RWDD3; the interaction enhances HIF1A sumoylation. Interacts with TSGA10. Interacts with HIF3A. Interacts with RORA (via the DNA binding domain); the interaction enhances HIF1A transcription under hypoxia through increasing protein stability. Interaction with PSMA7 inhibits the transactivation activity of HIF1A under both normoxic and hypoxia-mimicking conditions. Interacts with USP20. Interacts with RACK1; promotes HIF1A ubiquitination and proteasome-mediated degradation. Interacts (via N-terminus) with USP19. Interacts with SIRT2. Interacts (deacetylated form) with EGLN1. Interacts with CBFA2T3. Interacts with HSP90AA1 and HSP90AB1. Interacts with DCUN1D1; this interaction increases the interaction between VHL and DCUN1D1. Interacts with HIF1AN. In terms of processing, S-nitrosylation of Cys-799 may be responsible for increased recruitment of p300 coactivator necessary for transcriptional activity of HIF-1 complex. Post-translationally, acetylation of Lys-531 by ARD1 increases interaction with VHL and stimulates subsequent proteasomal degradation. Deacetylated by SIRT2 increases its interaction with and hydroxylation by EGLN1 thereby inactivating HIF1A activity by inducing its proteasomal degradation. Ubiquitinated; in normoxia, following hydroxylation and interaction with VHL. Lys-531 appears to be the principal site of ubiquitination. Clioquinol, the Cu/Zn-chelator, inhibits ubiquitination through preventing hydroxylation at Asn-802. Ubiquitinated by E3 ligase VHL. Deubiquitinated by UCHL1. In terms of processing, requires phosphorylation for DNA-binding. Phosphorylation at Ser-247 by CSNK1D/CK1 represses kinase activity and impairs ARNT binding. Phosphorylation by GSK3-beta and PLK3 promote degradation by the proteasome. Post-translationally, the iron and 2-oxoglutarate dependent 3-hydroxylation of asparagine is (S) stereospecific within HIF CTAD domains. Sumoylated; with SUMO1 under hypoxia. Sumoylation is enhanced through interaction with RWDD3. Both sumoylation and desumoylation seem to be involved in the regulation of its stability during hypoxia. Sumoylation can promote either its stabilization or its VHL-dependent degradation by promoting hydroxyproline-independent HIF1A-VHL complex binding, thus leading to HIF1A ubiquitination and proteasomal degradation. Desumoylation by SENP1 increases its stability amd transcriptional activity. There is a disaccord between various publications on the effect of sumoylation and desumoylation on its stability and transcriptional activity. In terms of processing, in normoxia, is hydroxylated on Pro-402 and Pro-563 in the oxygen-dependent degradation domain (ODD) by EGLN1/PHD2 and EGLN2/PHD1. EGLN3/PHD3 has also been shown to hydroxylate Pro-563. The hydroxylated prolines promote interaction with VHL, initiating rapid ubiquitination and subsequent proteasomal degradation. Deubiquitinated by USP20. Under hypoxia, proline hydroxylation is impaired and ubiquitination is attenuated, resulting in stabilization. In normoxia, is hydroxylated on Asn-802 by HIF1AN, thus abrogating interaction with CREBBP and EP300 and preventing transcriptional activation. Repressed by iron ion, via Fe(2+) prolyl hydroxylase (PHD) enzymes-mediated hydroxylation and subsequent proteasomal degradation. In terms of tissue distribution, expressed in the kidney, higher expression is seen in the renal medulla than in the cortex. Expressed also in the perivenous zone of the liver.

It is found in the cytoplasm. It localises to the nucleus. The protein resides in the nucleus speckle. Its activity is regulated as follows. Induced by reactive oxygen species (ROS). In terms of biological role, functions as a master transcriptional regulator of the adaptive response to hypoxia. Under hypoxic conditions, activates the transcription of over 40 genes, including erythropoietin, glucose transporters, glycolytic enzymes, vascular endothelial growth factor, HILPDA, and other genes whose protein products increase oxygen delivery or facilitate metabolic adaptation to hypoxia. Plays an essential role in embryonic vascularization, tumor angiogenesis and pathophysiology of ischemic disease. Heterodimerizes with ARNT; heterodimer binds to core DNA sequence 5'-TACGTG-3' within the hypoxia response element (HRE) of target gene promoters. Activation requires recruitment of transcriptional coactivators such as CREBBP and EP300. Activity is enhanced by interaction with NCOA1 and/or NCOA2. Interaction with redox regulatory protein APEX1 seems to activate CTAD and potentiates activation by NCOA1 and CREBBP. Involved in the axonal distribution and transport of mitochondria in neurons during hypoxia. This is Hypoxia-inducible factor 1-alpha (Hif1a) from Rattus norvegicus (Rat).